Reading from the N-terminus, the 449-residue chain is Signal recognition particle protein (449 aa).

GTP contacts are provided by residues 109–116, 191–195, and 249–252; these read GLQGSGKT, DTAGR, and SRID.

This sequence belongs to the GTP-binding SRP family. SRP54 subfamily. Part of the signal recognition particle protein translocation system, which is composed of SRP and FtsY. SRP is a ribonucleoprotein composed of Ffh and a 4.5S RNA molecule.

It is found in the cytoplasm. It carries out the reaction GTP + H2O = GDP + phosphate + H(+). Functionally, involved in targeting and insertion of nascent membrane proteins into the cytoplasmic membrane. Binds to the hydrophobic signal sequence of the ribosome-nascent chain (RNC) as it emerges from the ribosomes. The SRP-RNC complex is then targeted to the cytoplasmic membrane where it interacts with the SRP receptor FtsY. Interaction with FtsY leads to the transfer of the RNC complex to the Sec translocase for insertion into the membrane, the hydrolysis of GTP by both Ffh and FtsY, and the dissociation of the SRP-FtsY complex into the individual components. The sequence is that of Signal recognition particle protein from Rickettsia conorii (strain ATCC VR-613 / Malish 7).